The primary structure comprises 226 residues: Ribose-5-phosphate isomerase A (226 aa).

Substrate is bound by residues 28 to 31 (TGST), 83 to 86 (DGAD), and 97 to 100 (KGGG). Residue Glu-106 is the Proton acceptor of the active site. Substrate is bound at residue Lys-124.

It belongs to the ribose 5-phosphate isomerase family. In terms of assembly, homotetramer.

The catalysed reaction is aldehydo-D-ribose 5-phosphate = D-ribulose 5-phosphate. The protein operates within carbohydrate biosynthesis; D-ribose 5-phosphate biosynthesis. Functionally, catalyzes the reversible conversion of ribose-5-phosphate to ribulose 5-phosphate. This is Ribose-5-phosphate isomerase A from Methanocaldococcus jannaschii (strain ATCC 43067 / DSM 2661 / JAL-1 / JCM 10045 / NBRC 100440) (Methanococcus jannaschii).